We begin with the raw amino-acid sequence, 272 residues long: Formamidopyrimidine-DNA glycosylase (272 aa).

Proline 2 (schiff-base intermediate with DNA) is an active-site residue. Catalysis depends on glutamate 3, which acts as the Proton donor. The active-site Proton donor; for beta-elimination activity is the lysine 58. Histidine 92, arginine 111, and arginine 153 together coordinate DNA. The FPG-type zinc finger occupies 238-272; sequence AVYGRQGQSCPRCGGLVERCRLGQRSTFFCPACQR. Arginine 262 acts as the Proton donor; for delta-elimination activity in catalysis.

Belongs to the FPG family. As to quaternary structure, monomer. It depends on Zn(2+) as a cofactor.

The catalysed reaction is Hydrolysis of DNA containing ring-opened 7-methylguanine residues, releasing 2,6-diamino-4-hydroxy-5-(N-methyl)formamidopyrimidine.. The enzyme catalyses 2'-deoxyribonucleotide-(2'-deoxyribose 5'-phosphate)-2'-deoxyribonucleotide-DNA = a 3'-end 2'-deoxyribonucleotide-(2,3-dehydro-2,3-deoxyribose 5'-phosphate)-DNA + a 5'-end 5'-phospho-2'-deoxyribonucleoside-DNA + H(+). Its function is as follows. Involved in base excision repair of DNA damaged by oxidation or by mutagenic agents. Acts as a DNA glycosylase that recognizes and removes damaged bases. Has a preference for oxidized purines, such as 7,8-dihydro-8-oxoguanine (8-oxoG). Has AP (apurinic/apyrimidinic) lyase activity and introduces nicks in the DNA strand. Cleaves the DNA backbone by beta-delta elimination to generate a single-strand break at the site of the removed base with both 3'- and 5'-phosphates. In Laribacter hongkongensis (strain HLHK9), this protein is Formamidopyrimidine-DNA glycosylase.